The chain runs to 494 residues: BTB/POZ domain and ankyrin repeat-containing protein NH5.1 (494 aa).

The 106-residue stretch at 25–130 folds into the BTB domain; sequence SDVAFSVEGR…LYSGQASVAA (106 aa). Positions 60 to 94 are disordered; the sequence is NHQPPPPPPPLNWPMAGGGGGGSGGGGRGGAGGGG. The segment covering 61 to 71 has biased composition (pro residues); sequence HQPPPPPPPLN. Positions 75–94 are enriched in gly residues; it reads AGGGGGGSGGGGRGGAGGGG. A C2HC NPR-type zinc finger spans residues 136–150; that stretch reads LPGCGARGCWHTRCG. Residues cysteine 139, cysteine 144, histidine 146, and cysteine 149 each coordinate Zn(2+). ANK repeat units lie at residues 274–302, 303–333, 338–367, and 371–405; these read NKIR…GLDL, DDAL…DVNS, TGKT…DPNS, and DGVT…KLRL. 2 disordered regions span residues 421–443 and 469–494; these read DGAP…PRSD and AAGE…NGFA.

The protein belongs to the plant 'ANKYRIN-BTB/POZ' family. 'NOOT-BOP-COCH-like' (NBCL) subfamily. In terms of assembly, homodimer. Interacts with TGAL5, TGAL7, TGAL8 and TGAL9.

Its subcellular location is the nucleus. The protein localises to the cytoplasm. Its pathway is protein modification; protein ubiquitination. In terms of biological role, may act as a substrate-specific adapter of an E3 ubiquitin-protein ligase complex (CUL3-RBX1-BTB) which mediates the ubiquitination and subsequent proteasomal degradation of target proteins. Transcriptional co-regulator involved in the promotion of leaf and floral meristem fate and determinacy. Required for the abscission of senescent organs, probably by regulating the cell wall disorganization in abscission zones (AZs, e.g. pulvini at the base of leaves). In Oryza sativa subsp. japonica (Rice), this protein is BTB/POZ domain and ankyrin repeat-containing protein NH5.1.